Consider the following 157-residue polypeptide: Probable calcium-binding protein CML15 (157 aa).

EF-hand domains follow at residues 3–38 (DQIR…LGLK), 39–74 (PSGD…DLNE), 78–113 (INSE…MGQP), and 114–149 (LTYK…SAVD). Ca(2+) contacts are provided by D16, D18, D20, S22, E27, D52, N54, N56, E63, D91, D93, N95, E102, D127, N129, D131, and E138.

In terms of biological role, potential calcium sensor. This is Probable calcium-binding protein CML15 (CML15) from Arabidopsis thaliana (Mouse-ear cress).